A 263-amino-acid polypeptide reads, in one-letter code: Probable ABC transporter permease protein slr1045 (263 aa).

The next 7 membrane-spanning stretches (helical) occupy residues 12–32 (LWFQ…LHIL), 52–72 (SMAI…IQVA), 97–117 (APVL…AAEI), 140–162 (LVVP…SLFV), 167–186 (GLVI…LNSV), 192–212 (LWDV…IAII), and 234–254 (AVVT…WLMF).

It belongs to the MlaE permease family.

It localises to the cell membrane. Its function is as follows. Could be part of an ABC transporter complex. In Synechocystis sp. (strain ATCC 27184 / PCC 6803 / Kazusa), this protein is Probable ABC transporter permease protein slr1045.